Consider the following 157-residue polypeptide: Protein Smg homolog (157 aa).

Belongs to the Smg family.

The sequence is that of Protein Smg homolog from Tolumonas auensis (strain DSM 9187 / NBRC 110442 / TA 4).